Consider the following 311-residue polypeptide: Methionyl-tRNA formyltransferase (311 aa).

112–115 (SLLP) provides a ligand contact to (6S)-5,6,7,8-tetrahydrofolate.

This sequence belongs to the Fmt family.

It carries out the reaction L-methionyl-tRNA(fMet) + (6R)-10-formyltetrahydrofolate = N-formyl-L-methionyl-tRNA(fMet) + (6S)-5,6,7,8-tetrahydrofolate + H(+). Attaches a formyl group to the free amino group of methionyl-tRNA(fMet). The formyl group appears to play a dual role in the initiator identity of N-formylmethionyl-tRNA by promoting its recognition by IF2 and preventing the misappropriation of this tRNA by the elongation apparatus. The polypeptide is Methionyl-tRNA formyltransferase (Bartonella henselae (strain ATCC 49882 / DSM 28221 / CCUG 30454 / Houston 1) (Rochalimaea henselae)).